The primary structure comprises 164 residues: Glycine cleavage system H protein, mitochondrial (164 aa).

The transit peptide at Met1 to Leu39 directs the protein to the mitochondrion. Residues Ile57–Thr139 enclose the Lipoyl-binding domain. Residue Lys98 is modified to N6-lipoyllysine.

The protein belongs to the GcvH family. In terms of assembly, the glycine cleavage system is composed of four proteins: P (GLDC), T (GCST), L (DLD) and H (GCSH). Interacts with GLDC. The cofactor is (R)-lipoate.

Its subcellular location is the mitochondrion. In terms of biological role, the glycine cleavage system catalyzes the degradation of glycine. The H protein (GCSH) shuttles the methylamine group of glycine from the P protein (GLDC) to the T protein (GCST). Has a pivotal role in the lipoylation of enzymes involved in cellular energetics such as the mitochondrial dihydrolipoyllysine-residue acetyltransferase component of pyruvate dehydrogenase complex (DLAT), and the mitochondrial dihydrolipoyllysine-residue succinyltransferase component of 2-oxoglutarate dehydrogenase complex (DLST). The sequence is that of Glycine cleavage system H protein, mitochondrial from Gallus gallus (Chicken).